A 192-amino-acid chain; its full sequence is Anthrone oxygenase (192 aa).

Helical transmembrane passes span 12–32, 54–74, and 86–106; these read IVTG…TVPV, GHIS…YIAA, and AALV…VMSS. N-linked (GlcNAc...) asparagine glycosylation is found at Asn-130, Asn-138, and Asn-147. The chain crosses the membrane as a helical span at residues 172–192; that stretch reads MHLVRSLFPLMAAVLGVGICV.

Belongs to the anthrone oxygenase family.

Its subcellular location is the membrane. It catalyses the reaction emodin anthrone + O2 = emodin + H2O + H(+). The protein operates within secondary metabolite biosynthesis. In terms of biological role, anthrone oxygenase; part of the gene cluster that mediates the biosynthesis of monodictyphenone, a prenyl xanthone derivative. The pathway begins with the synthesis of atrochrysone thioester by the polyketide synthase (PKS) mdpG. The atrochrysone carboxyl ACP thioesterase mdpF then breaks the thioester bond and releases the atrochrysone carboxylic acid from mdpG. The atrochrysone carboxylic acid is then converted to atrochrysone which is further transformed into emodin anthrone by mdpH-1 and mdpH-2. Emodin is further modified to yield monodictyphenone via several steps involving mdpB, mdpC mdpJ, mdpK and mdpL. These enzymes with xptA, xptB and xptC are also proposed to be involved in the synthesis of shamixanthone from emodin. Especially, direct reduction of emodin by the short chain dehydrogenase mdpC followed by dehydration catalyzed by the scytalone dehydratase-like protein mdpB gives loss of oxygen and formation of chrysophanol intermediate in two simple steps. The protein is Anthrone oxygenase of Emericella nidulans (strain FGSC A4 / ATCC 38163 / CBS 112.46 / NRRL 194 / M139) (Aspergillus nidulans).